Reading from the N-terminus, the 683-residue chain is DNA ligase (683 aa).

Residues Asp-36–Asp-40, Ser-85–Leu-86, and Glu-121 contribute to the NAD(+) site. The active-site N6-AMP-lysine intermediate is Lys-123. The NAD(+) site is built by Arg-144, Glu-180, Lys-296, and Lys-320. Zn(2+) contacts are provided by Cys-413, Cys-416, Cys-431, and Cys-437. One can recognise a BRCT domain in the interval Pro-605–Leu-683.

Belongs to the NAD-dependent DNA ligase family. LigA subfamily. Mg(2+) serves as cofactor. Requires Mn(2+) as cofactor.

It catalyses the reaction NAD(+) + (deoxyribonucleotide)n-3'-hydroxyl + 5'-phospho-(deoxyribonucleotide)m = (deoxyribonucleotide)n+m + AMP + beta-nicotinamide D-nucleotide.. DNA ligase that catalyzes the formation of phosphodiester linkages between 5'-phosphoryl and 3'-hydroxyl groups in double-stranded DNA using NAD as a coenzyme and as the energy source for the reaction. It is essential for DNA replication and repair of damaged DNA. The polypeptide is DNA ligase (Gluconobacter oxydans (strain 621H) (Gluconobacter suboxydans)).